The following is a 128-amino-acid chain: Transcription antitermination protein NusB (128 aa).

This sequence belongs to the NusB family.

Its function is as follows. Involved in transcription antitermination. Required for transcription of ribosomal RNA (rRNA) genes. Binds specifically to the boxA antiterminator sequence of the ribosomal RNA (rrn) operons. The polypeptide is Transcription antitermination protein NusB (Staphylococcus carnosus (strain TM300)).